The sequence spans 461 residues: MPNRLIPLANPANRVLQLDAKLLDNEISDMLYRQLSGAFNSNRLPSWLGRIHSNYASELKLLLELLIFKVTVWNKHSSYGLTLQNLVMYDGGVHNKKFRSKQQSELRVTKKILLLSSVLLGYFVKKIQSYVYSFEDYDLETDGEDLSTLERIRLKTIKLLKSQISTLEKAHSVLSLVNFVTFLVSGSFPDLTTRILNIRFKPLVTTQVAFASNPETISYEFQNRQLVWNTLTEFIVFILPALSVPKFTKSLVSSITGTSPKSSQVTDEDLKVFSSLPERVCAICFQNSQNSDSGAQNDISLNDTLVTNPYETTCGHIYCYVCILSKLQIFKEEGKNLPKSDPNKYWHCLRCNEPASWCRVYTGDVEDALRQKAVEEVTEDEDASSEDEEKRDQDSEGAKTVSQSFHHVNGSDYQTASFIEQAELNENEYTDGSEVEIYDAEDEYTDEEVDDDSPGFFVGAL.

Residues 1-13 lie on the Peroxisomal matrix side of the membrane; the sequence is MPNRLIPLANPAN. Residues 14–40 traverse the membrane as a helical segment; it reads RVLQLDAKLLDNEISDMLYRQLSGAFN. Residues 41–51 are Cytoplasmic-facing; sequence SNRLPSWLGRI. Residues 52–77 traverse the membrane as a helical segment; sequence HSNYASELKLLLELLIFKVTVWNKHS. The Peroxisomal matrix portion of the chain corresponds to 78–101; that stretch reads SYGLTLQNLVMYDGGVHNKKFRSK. The helical transmembrane segment at 102–139 threads the bilayer; it reads QQSELRVTKKILLLSSVLLGYFVKKIQSYVYSFEDYDL. The Cytoplasmic portion of the chain corresponds to 140–151; sequence ETDGEDLSTLER. The chain crosses the membrane as a helical span at residues 152 to 185; that stretch reads IRLKTIKLLKSQISTLEKAHSVLSLVNFVTFLVS. Topologically, residues 186–218 are peroxisomal matrix; sequence GSFPDLTTRILNIRFKPLVTTQVAFASNPETIS. Residues 219–242 traverse the membrane as a helical segment; that stretch reads YEFQNRQLVWNTLTEFIVFILPAL. Residues 243 to 461 lie on the Cytoplasmic side of the membrane; it reads SVPKFTKSLV…DSPGFFVGAL (219 aa). Zn(2+)-binding residues include cysteine 281, cysteine 284, cysteine 314, histidine 316, cysteine 319, cysteine 322, cysteine 348, and cysteine 351. The RING-type zinc finger occupies 281-352; that stretch reads CAICFQNSQN…NKYWHCLRCN (72 aa). Disordered stretches follow at residues 374–408 and 440–461; these read VEEV…FHHV and AEDE…VGAL. The segment covering 376-387 has biased composition (acidic residues); it reads EVTEDEDASSED. Residues 388–397 show a composition bias toward basic and acidic residues; sequence EEKRDQDSEG. Acidic residues predominate over residues 440 to 453; the sequence is AEDEYTDEEVDDDS.

This sequence belongs to the pex2/pex10/pex12 family. In terms of assembly, component of the peroxisomal translocation complex, composed of at least PEX3, PEX2, PEX10 and PEX12.

It is found in the peroxisome membrane. The enzyme catalyses [E2 ubiquitin-conjugating enzyme]-S-ubiquitinyl-L-cysteine + [acceptor protein]-L-cysteine = [E2 ubiquitin-conjugating enzyme]-L-cysteine + [acceptor protein]-S-ubiquitinyl-L-cysteine.. It participates in protein modification; protein ubiquitination. In terms of biological role, E3 ubiquitin-protein ligase component of the peroxisomal translocation complex. The two types of peroxisomal matrix targeting signals, PTS1 and PTS2, are first recognized in the cytosol by their receptors PEX5 and PEX7, respectively, which then carry the cargo to the peroxisomal membrane. The peroxisomal targeting signal (PTS) receptor-cargo complexes interact with peroxisomal membrane protein (PMP) components of the docking complex. They have then additional downstream interactions with the translocation complex, leading to the transport of fully folded and oligomerized cargo into the peroxisome matrix. The peroxisomal translocation complex forms the retrotranslocation channel with each subunit contributing transmembrane segments that coassemble into an open channel that specifically allows the passage of PEX5 and PEX20 through the peroxisomal membrane. Specifically catalyzes monoubiquitination of PEX5 and/or PEX20 at 'Cys-6' and 'Cys-8', respectively, a modification that acts as a signal for PEX5 or PEX20 export from peroxisomes to the cytosol, thereby promoting PEX5 and PEX20 recycling. The sequence is that of Peroxisomal biogenesis factor 2 (PEX2) from Komagataella phaffii (strain GS115 / ATCC 20864) (Yeast).